A 249-amino-acid chain; its full sequence is Ribosomal RNA small subunit methyltransferase J (249 aa).

Residues 97–98 (RD), 113–114 (ER), and Asp167 contribute to the S-adenosyl-L-methionine site.

This sequence belongs to the methyltransferase superfamily. RsmJ family.

The protein localises to the cytoplasm. It catalyses the reaction guanosine(1516) in 16S rRNA + S-adenosyl-L-methionine = N(2)-methylguanosine(1516) in 16S rRNA + S-adenosyl-L-homocysteine + H(+). Functionally, specifically methylates the guanosine in position 1516 of 16S rRNA. The protein is Ribosomal RNA small subunit methyltransferase J of Aeromonas salmonicida (strain A449).